We begin with the raw amino-acid sequence, 1187 residues long: Protein WWC2 (1187 aa).

WW domains follow at residues 10 to 43 (LPLP…DPRD) and 57 to 90 (DELP…DPRK). Coiled coils occupy residues 121-194 (KEQR…YKQQ) and 224-256 (ELKS…FHLD). Ser286 is modified (phosphoserine). Positions 302–423 (LAEKVRLSLQ…EETTKLTTSL (122 aa)) form a coiled coil. The tract at residues 438 to 464 (SSGSSLGSLASSRGSLNTSSRGSLNSL) is disordered. Residues 697-820 (ETAQVQIGLR…FSNEIFMLWY (124 aa)) form the C2 domain. Disordered stretches follow at residues 830–849 (CKKN…QPML) and 874–963 (ELAQ…ETNT). The stretch at 859–885 (ALLARTSAELLAVEQELAQEEEEEELR) forms a coiled coil. Acidic residues predominate over residues 875–884 (LAQEEEEEEL). Thr999 bears the Phosphothreonine mark. A Phosphoserine modification is found at Ser1017. The tract at residues 1026–1045 (SLFVRNSTERRSLRVKRAVC) is interaction with PRKCZ. Positions 1063 to 1143 (DLELDLQASL…DLNAERLMRQ (81 aa)) form a coiled coil.

Belongs to the WWC family. Forms homodimers and heterodimers with WWC1 and WWC3. Interacts with DLC1 and PRKCZ. Interacts (via WW domains) with LATS1 and LATS2.

The protein resides in the cytoplasm. Its subcellular location is the cytosol. In terms of biological role, regulator of the Hippo signaling pathway, also known as the Salvador-Warts-Hippo (SWH) pathway. Enhances phosphorylation of LATS1 and YAP1 and negatively regulates cell proliferation and organ growth due to a suppression of the transcriptional activity of YAP1, the major effector of the Hippo pathway. The chain is Protein WWC2 (Wwc2) from Mus musculus (Mouse).